The primary structure comprises 121 residues: Small ribosomal subunit protein uS13 (121 aa).

Residues 89–121 are disordered; it reads MRHRRGLPVRGQNTKNNARTRKGKKVSIAGKKK. Over residues 106-121 the composition is skewed to basic residues; the sequence is ARTRKGKKVSIAGKKK.

It belongs to the universal ribosomal protein uS13 family. Part of the 30S ribosomal subunit. Forms a loose heterodimer with protein S19. Forms two bridges to the 50S subunit in the 70S ribosome.

Located at the top of the head of the 30S subunit, it contacts several helices of the 16S rRNA. In the 70S ribosome it contacts the 23S rRNA (bridge B1a) and protein L5 of the 50S subunit (bridge B1b), connecting the 2 subunits; these bridges are implicated in subunit movement. Contacts the tRNAs in the A and P-sites. The polypeptide is Small ribosomal subunit protein uS13 (Latilactobacillus sakei subsp. sakei (strain 23K) (Lactobacillus sakei subsp. sakei)).